Consider the following 101-residue polypeptide: Small ribosomal subunit protein bS18c (101 aa).

Basic residues predominate over residues 1–19 (MDKSKQPFHKTKRSFRRRL). The disordered stretch occupies residues 1–23 (MDKSKQPFHKTKRSFRRRLPPIG).

It belongs to the bacterial ribosomal protein bS18 family. In terms of assembly, part of the 30S ribosomal subunit.

It localises to the plastid. Its subcellular location is the chloroplast. This Lemna minor (Common duckweed) protein is Small ribosomal subunit protein bS18c.